Here is a 192-residue protein sequence, read N- to C-terminus: Protein GrpE (192 aa).

The protein belongs to the GrpE family. Homodimer.

The protein localises to the cytoplasm. Functionally, participates actively in the response to hyperosmotic and heat shock by preventing the aggregation of stress-denatured proteins, in association with DnaK and GrpE. It is the nucleotide exchange factor for DnaK and may function as a thermosensor. Unfolded proteins bind initially to DnaJ; upon interaction with the DnaJ-bound protein, DnaK hydrolyzes its bound ATP, resulting in the formation of a stable complex. GrpE releases ADP from DnaK; ATP binding to DnaK triggers the release of the substrate protein, thus completing the reaction cycle. Several rounds of ATP-dependent interactions between DnaJ, DnaK and GrpE are required for fully efficient folding. This chain is Protein GrpE, found in Neisseria gonorrhoeae (strain NCCP11945).